Reading from the N-terminus, the 255-residue chain is Large ribosomal subunit protein uL4 (255 aa).

It belongs to the universal ribosomal protein uL4 family. In terms of assembly, part of the 50S ribosomal subunit.

Its function is as follows. One of the primary rRNA binding proteins, this protein initially binds near the 5'-end of the 23S rRNA. It is important during the early stages of 50S assembly. It makes multiple contacts with different domains of the 23S rRNA in the assembled 50S subunit and ribosome. Functionally, forms part of the polypeptide exit tunnel. In Thermoplasma volcanium (strain ATCC 51530 / DSM 4299 / JCM 9571 / NBRC 15438 / GSS1), this protein is Large ribosomal subunit protein uL4.